The following is a 466-amino-acid chain: Ribosomal protein uS12 methylthiotransferase RimO (466 aa).

Residues 16–127 (PKVAFAHLGC…IVDVLQRVEA (112 aa)) form the MTTase N-terminal domain. Cysteine 25, cysteine 61, cysteine 90, cysteine 165, cysteine 169, and cysteine 172 together coordinate [4Fe-4S] cluster. The region spanning 151-380 (TTDQAVAYLK…MALQQPIAAE (230 aa)) is the Radical SAM core domain. Positions 383-454 (QRWVGKTVDV…IYDLTGHIVG (72 aa)) constitute a TRAM domain.

Belongs to the methylthiotransferase family. RimO subfamily. Requires [4Fe-4S] cluster as cofactor.

Its subcellular location is the cytoplasm. It carries out the reaction L-aspartate(89)-[ribosomal protein uS12]-hydrogen + (sulfur carrier)-SH + AH2 + 2 S-adenosyl-L-methionine = 3-methylsulfanyl-L-aspartate(89)-[ribosomal protein uS12]-hydrogen + (sulfur carrier)-H + 5'-deoxyadenosine + L-methionine + A + S-adenosyl-L-homocysteine + 2 H(+). In terms of biological role, catalyzes the methylthiolation of an aspartic acid residue of ribosomal protein uS12. This is Ribosomal protein uS12 methylthiotransferase RimO from Synechococcus sp. (strain CC9902).